The sequence spans 319 residues: Phenoxybenzoate dioxygenase subunit beta (319 aa).

The FAD-binding FR-type domain maps to 7-109 (MAPVSLRIHA…DGPSNHFALD (103 aa)). Position 113–223 (113–223 (PHAVFIAGGI…PARVHLEYFA (111 aa))) interacts with NAD(+). The 2Fe-2S ferredoxin-type domain occupies 234–319 (FVVHLARSGR…SKTAELTLDL (86 aa)). 4 residues coordinate [2Fe-2S] cluster: Cys-268, Cys-273, Cys-276, and Cys-306.

Belongs to the PDR/VanB family. As to quaternary structure, this dioxygenase system consists of two proteins: the alpha subunit (PobA) and a subunit (PobB) that acts as a ferredoxin and a ferredoxin reductase. Requires FMN as cofactor.

Its pathway is aromatic compound metabolism; carboxydiphenyl ether degradation. In terms of biological role, degrades exclusively diarylether compounds having carboxyl groups in the 3- or 4-position. Yields a hemiacetal that spontaneously hydrolyzes to phenol and protocatechuate. This chain is Phenoxybenzoate dioxygenase subunit beta (pobB), found in Ectopseudomonas oleovorans (Pseudomonas oleovorans).